The primary structure comprises 800 residues: DNA topoisomerase 4 subunit A (800 aa).

One can recognise a Topo IIA-type catalytic domain in the interval Leu-31–Glu-495. Tyr-119 acts as the O-(5'-phospho-DNA)-tyrosine intermediate in catalysis.

The protein belongs to the type II topoisomerase GyrA/ParC subunit family. ParC type 2 subfamily. As to quaternary structure, heterotetramer composed of ParC and ParE.

It localises to the cell membrane. It catalyses the reaction ATP-dependent breakage, passage and rejoining of double-stranded DNA.. Topoisomerase IV is essential for chromosome segregation. It relaxes supercoiled DNA. Performs the decatenation events required during the replication of a circular DNA molecule. The chain is DNA topoisomerase 4 subunit A from Staphylococcus aureus (strain MW2).